We begin with the raw amino-acid sequence, 310 residues long: Ribonuclease Z (310 aa).

Positions 61, 63, 65, 66, and 139 each coordinate Zn(2+). D65 serves as the catalytic Proton acceptor. Residues 150-175 (EDDRPGRFDRPKAEELGVPVGPKFGR) form a disordered region. Residues 153–164 (RPGRFDRPKAEE) show a composition bias toward basic and acidic residues. The Zn(2+) site is built by D210 and H268.

Belongs to the RNase Z family. Homodimer. Zn(2+) is required as a cofactor.

The catalysed reaction is Endonucleolytic cleavage of RNA, removing extra 3' nucleotides from tRNA precursor, generating 3' termini of tRNAs. A 3'-hydroxy group is left at the tRNA terminus and a 5'-phosphoryl group is left at the trailer molecule.. Functionally, zinc phosphodiesterase, which displays some tRNA 3'-processing endonuclease activity. Probably involved in tRNA maturation, by removing a 3'-trailer from precursor tRNA. This is Ribonuclease Z from Halorubrum lacusprofundi (strain ATCC 49239 / DSM 5036 / JCM 8891 / ACAM 34).